The chain runs to 306 residues: Pantothenate kinase (306 aa).

Residue 91-98 (GSVAVGKS) coordinates ATP.

Belongs to the prokaryotic pantothenate kinase family.

The protein localises to the cytoplasm. The catalysed reaction is (R)-pantothenate + ATP = (R)-4'-phosphopantothenate + ADP + H(+). It functions in the pathway cofactor biosynthesis; coenzyme A biosynthesis; CoA from (R)-pantothenate: step 1/5. This chain is Pantothenate kinase, found in Streptococcus pneumoniae serotype 2 (strain D39 / NCTC 7466).